We begin with the raw amino-acid sequence, 548 residues long: ATP synthase subunit alpha (548 aa).

172-179 (GDRKTGKT) is an ATP binding site. The interval 511–548 (FETTSGESVVPDENVEAMSEDDVEKESVKVRKPAPKKK) is disordered. Positions 523-534 (ENVEAMSEDDVE) are enriched in acidic residues.

The protein belongs to the ATPase alpha/beta chains family. As to quaternary structure, F-type ATPases have 2 components, CF(1) - the catalytic core - and CF(0) - the membrane proton channel. CF(1) has five subunits: alpha(3), beta(3), gamma(1), delta(1), epsilon(1). CF(0) has three main subunits: a(1), b(2) and c(9-12). The alpha and beta chains form an alternating ring which encloses part of the gamma chain. CF(1) is attached to CF(0) by a central stalk formed by the gamma and epsilon chains, while a peripheral stalk is formed by the delta and b chains.

The protein resides in the cell membrane. The catalysed reaction is ATP + H2O + 4 H(+)(in) = ADP + phosphate + 5 H(+)(out). Functionally, produces ATP from ADP in the presence of a proton gradient across the membrane. The alpha chain is a regulatory subunit. The protein is ATP synthase subunit alpha of Mycobacterium sp. (strain JLS).